The sequence spans 212 residues: Octanoyltransferase (212 aa).

Residues Ala31–Ile209 form the BPL/LPL catalytic domain. Residues Arg70–His77, Ser138–Gly140, and Gly151–Ala153 each bind substrate. The Acyl-thioester intermediate role is filled by Cys169.

It belongs to the LipB family.

Its subcellular location is the cytoplasm. The enzyme catalyses octanoyl-[ACP] + L-lysyl-[protein] = N(6)-octanoyl-L-lysyl-[protein] + holo-[ACP] + H(+). It functions in the pathway protein modification; protein lipoylation via endogenous pathway; protein N(6)-(lipoyl)lysine from octanoyl-[acyl-carrier-protein]: step 1/2. Functionally, catalyzes the transfer of endogenously produced octanoic acid from octanoyl-acyl-carrier-protein onto the lipoyl domains of lipoate-dependent enzymes. Lipoyl-ACP can also act as a substrate although octanoyl-ACP is likely to be the physiological substrate. The sequence is that of Octanoyltransferase from Haemophilus influenzae (strain PittEE).